Here is a 1045-residue protein sequence, read N- to C-terminus: Elongation factor 3 (1045 aa).

ADP is bound by residues isoleucine 42, histidine 44, and serine 83. 7 HEAT repeats span residues 86 to 123 (PYVV…AVNP), 125 to 162 (AVKA…QAKS), 166 to 203 (LRMT…TVEN), 171 to 209 (LIPV…IERF), 205 to 241 (DIER…EVTP), 242 to 279 (ATLS…LVED), and 285 to 323 (PFLN…VGAV). Threonine 392 and histidine 396 together coordinate ADP. ABC transporter domains lie at 426-641 (EEGE…YYEL) and 667-993 (VKVS…KKED). ADP-binding residues include asparagine 703, glutamate 922, asparagine 925, and histidine 951. A disordered region spans residues 975–1045 (GHNWVSGQGS…AYVSDDDADF (71 aa)). Residues 1020-1031 (RKKKKERMKKKK) show a composition bias toward basic residues.

The protein belongs to the ABC transporter superfamily. ABCF family. EF3 subfamily.

Its subcellular location is the cytoplasm. The protein resides in the cytosol. The enzyme catalyses ATP + H2O = ADP + phosphate + H(+). The protein operates within protein biosynthesis; polypeptide chain elongation. Its function is as follows. Ribosome-dependent ATPase that functions in cytoplasmic translation elongation. Required for the ATP-dependent release of deacylated tRNA from the ribosomal E-site during protein biosynthesis. Stimulates the eEF1A-dependent binding of aminoacyl-tRNA to the ribosomal A-site, which has reduced affinity for tRNA as long as the E-site is occupied. Assists translation termination by stimulating the release of nascent protein from the ribosome by release factors. The protein is Elongation factor 3 of Zygosaccharomyces rouxii (strain ATCC 2623 / CBS 732 / NBRC 1130 / NCYC 568 / NRRL Y-229).